The primary structure comprises 173 residues: Ribosome maturation factor RimM (173 aa).

The 75-residue stretch at 94-168 (SNESYLCDLL…LIRINPPKGL (75 aa)) folds into the PRC barrel domain.

Belongs to the RimM family. In terms of assembly, binds ribosomal protein uS19.

It localises to the cytoplasm. In terms of biological role, an accessory protein needed during the final step in the assembly of 30S ribosomal subunit, possibly for assembly of the head region. Essential for efficient processing of 16S rRNA. May be needed both before and after RbfA during the maturation of 16S rRNA. It has affinity for free ribosomal 30S subunits but not for 70S ribosomes. The sequence is that of Ribosome maturation factor RimM from Lawsonia intracellularis (strain PHE/MN1-00).